The chain runs to 152 residues: Small ribosomal subunit protein uS11B (152 aa).

Residues 131–152 form a disordered region; sequence EDVTPIPSDSTRRKGGRRGRRL. Basic residues predominate over residues 143–152; sequence RKGGRRGRRL.

Belongs to the universal ribosomal protein uS11 family.

In Anopheles gambiae (African malaria mosquito), this protein is Small ribosomal subunit protein uS11B.